A 390-amino-acid polypeptide reads, in one-letter code: S-adenosylmethionine synthase 3 (390 aa).

Glutamate 9 provides a ligand contact to Mg(2+). Histidine 15 provides a ligand contact to ATP. Glutamate 43 provides a ligand contact to K(+). L-methionine contacts are provided by glutamate 56 and glutamine 99. ATP is bound by residues 167-169, 235-238, aspartate 246, 252-253, alanine 269, lysine 273, and lysine 277; these read DGK, SGRF, and RK. Residue aspartate 246 participates in L-methionine binding. Lysine 277 lines the L-methionine pocket.

Belongs to the AdoMet synthase family. In terms of assembly, homotetramer. Mn(2+) is required as a cofactor. Requires Mg(2+) as cofactor. It depends on Co(2+) as a cofactor. K(+) serves as cofactor. The cofactor is NH4(+). As to expression, mostly expressed in roots, and, to a lower extent, in hypocotyls and cotyledons.

It is found in the cytoplasm. The catalysed reaction is L-methionine + ATP + H2O = S-adenosyl-L-methionine + phosphate + diphosphate. It functions in the pathway amino-acid biosynthesis; S-adenosyl-L-methionine biosynthesis; S-adenosyl-L-methionine from L-methionine: step 1/1. Its activity is regulated as follows. Inhibited by products of SAMS reaction (SAM, Pi, PPi), substrate analogs (cycloleucine and ethionine), and alternative nucleotides (GTP, CTP and ADP). Strongly repressed by PPPi. Catalyzes the formation of S-adenosylmethionine from methionine and ATP. The reaction comprises two steps that are both catalyzed by the same enzyme: formation of S-adenosylmethionine (AdoMet) and triphosphate, and subsequent hydrolysis of the triphosphate. This is S-adenosylmethionine synthase 3 (SAMS3) from Catharanthus roseus (Madagascar periwinkle).